The chain runs to 500 residues: Probable cytosol aminopeptidase (500 aa).

Mn(2+) is bound by residues K261 and D266. Residue K273 is part of the active site. Mn(2+) contacts are provided by D284, D343, and E345. Residue R347 is part of the active site.

It belongs to the peptidase M17 family. It depends on Mn(2+) as a cofactor.

It is found in the cytoplasm. It catalyses the reaction Release of an N-terminal amino acid, Xaa-|-Yaa-, in which Xaa is preferably Leu, but may be other amino acids including Pro although not Arg or Lys, and Yaa may be Pro. Amino acid amides and methyl esters are also readily hydrolyzed, but rates on arylamides are exceedingly low.. The enzyme catalyses Release of an N-terminal amino acid, preferentially leucine, but not glutamic or aspartic acids.. Its function is as follows. Presumably involved in the processing and regular turnover of intracellular proteins. Catalyzes the removal of unsubstituted N-terminal amino acids from various peptides. In Bacillus subtilis (strain 168), this protein is Probable cytosol aminopeptidase (pepA).